The chain runs to 210 residues: Cytochrome c biogenesis ATP-binding export protein CcmA (210 aa).

An ABC transporter domain is found at 1-208; it reads MHLNQLVISH…KVRTLSLDQF (208 aa). 38 to 45 contributes to the ATP binding site; the sequence is GHNGIGKT.

It belongs to the ABC transporter superfamily. CcmA exporter (TC 3.A.1.107) family. As to quaternary structure, the complex is composed of two ATP-binding proteins (CcmA) and two transmembrane proteins (CcmB).

It is found in the cell inner membrane. The enzyme catalyses heme b(in) + ATP + H2O = heme b(out) + ADP + phosphate + H(+). In terms of biological role, part of the ABC transporter complex CcmAB involved in the biogenesis of c-type cytochromes; once thought to export heme, this seems not to be the case, but its exact role is uncertain. Responsible for energy coupling to the transport system. This Haemophilus ducreyi (strain 35000HP / ATCC 700724) protein is Cytochrome c biogenesis ATP-binding export protein CcmA.